A 372-amino-acid chain; its full sequence is MINYGVVGVGYFGAELARFMNMHDNAKITCVYDPENGENIARELQCINMSSLDALVSSKLVDCVIVATPNYLHKEPVIKAAKNKKHVFCEKPIALSYEDCVDMVKACKEAGVTFMAGHIMNFFNGVQYARKLIKEGVIGEILSCHTKRNGWENKQERLSWKKMKEQSGGHLYHHIHELDCVQHLLGEIPETVTMIGGNLAHSGPGFGNEDDMLFMTLEFPSGKLATLEWGSAFNWPEHYVIINGTKGSIKIDMQETAGSLRIGGQTKHFLVHETQEEDDDRRKGNMTSEMDGAIAYGHPGKKTPLWLASLIRKETLFLHNILCGAKPEEDYIDLLNGEAAMSAIATADAATLSRSQDRKVKISEIIKHTSVM.

Residues Y11, F12, D33, N36, T68, N70, H73, E90, K91, and W160 each coordinate NAD(+).

It belongs to the Gfo/Idh/MocA family. As to quaternary structure, homodimer. It depends on NAD(+) as a cofactor.

It catalyses the reaction N-acetyl-2,7-anhydro-alpha-neuraminate + H2O = N-acetyl-alpha-neuraminate. The catalysed reaction is 2-deoxy-2,3-dehydro-N-acetylneuraminate + H2O = N-acetyl-alpha-neuraminate. With respect to regulation, all conversions require NAD(+) as a cofactor, which is regenerated in the reaction. The presence of EGTA and several divalent cations does not affect the activity. Its function is as follows. Hydratase involved in the degradation of sialic acids. Catalyzes the reversible conversion of the dehydrated form of N-acetylneuraminate (Neu5Ac), 2,7-anhydro-N-acetylneuraminate (2,7-AN), to Neu5Ac. Also catalyzes the irreversible conversion of 2-deoxy-2,3-didehydro-N-acetylneuraminate (2,3-EN) to Neu5Ac. The reaction mechanism involves keto intermediates and the transient formation of NADH. In Escherichia coli (strain K12), this protein is 2,7-anhydro-N-acetylneuraminate hydratase.